Reading from the N-terminus, the 87-residue chain is Large ribosomal subunit protein eL33 (87 aa).

This sequence belongs to the eukaryotic ribosomal protein eL33 family.

The protein is Large ribosomal subunit protein eL33 of Pyrococcus abyssi (strain GE5 / Orsay).